The following is a 380-amino-acid chain: Ceramide-binding protein svf1 (380 aa).

Residues 1-18 (MKAWLQSSISYYTGTAEP) are peripherally associates with membranes.

It belongs to the SVF1 family.

The protein localises to the golgi apparatus. Its subcellular location is the cis-Golgi network membrane. The protein resides in the endoplasmic reticulum membrane. It localises to the cytoplasm. It is found in the nucleus. Functionally, ceramide-binding protein that may transfer ceramides from the endoplasmic reticulum membrane to the cis-Golgi network membrane, and is thereby required for the biosynthesis of complex sphingolipids. The chain is Ceramide-binding protein svf1 from Schizosaccharomyces pombe (strain 972 / ATCC 24843) (Fission yeast).